A 695-amino-acid polypeptide reads, in one-letter code: Nicastrin (695 aa).

The signal sequence occupies residues 1-22 (MEMRLNAASIWLLILSYGATIA). At 23–654 (QGERTRDKMY…IFLRPSNVHQ (632 aa)) the chain is on the extracellular side. Asparagine 45, asparagine 108, asparagine 116, asparagine 138, asparagine 381, asparagine 461, asparagine 489, asparagine 585, and asparagine 609 each carry an N-linked (GlcNAc...) asparagine glycan. A helical membrane pass occupies residues 655–675 (VTTLSVGIVVLIISFCLVYII). Topologically, residues 676–695 (SSRSEVLFEDLPASNAALFG) are cytoplasmic.

Belongs to the nicastrin family. Component of the gamma-secretase complex, a complex composed of a presenilin (Psn) homodimer, nicastrin (Nct), Aph-1 and Pen-2.

Its subcellular location is the membrane. In terms of biological role, essential subunit of the gamma-secretase complex, an endoprotease complex that catalyzes the intramembrane cleavage of integral membrane proteins such as Notch. It probably represents a stabilizing cofactor required for the assembly of the gamma-secretase complex. The sequence is that of Nicastrin from Drosophila melanogaster (Fruit fly).